The primary structure comprises 75 residues: Brevinin-2SN2 (75 aa).

An N-terminal signal peptide occupies residues 1–22 (MFTLKKPLLFLFFLGTISLSFC). The propeptide at 23 to 40 (EEERGADEDDGGEMTEEE) is removed in mature form. A disulfide bridge links C69 with C75.

This sequence belongs to the frog skin active peptide (FSAP) family. Brevinin subfamily. In terms of tissue distribution, expressed by the skin glands.

It is found in the secreted. In terms of biological role, antimicrobial peptide. Active against some Gram-negative and a variety of Gram-positive bacterial strains. Active against fungus C.glabrata 090902 but not against C.albicans ATCC 10231. Shows hemolytic activity against human erythrocytes. The protein is Brevinin-2SN2 of Sylvirana spinulosa (Fine-spined frog).